The sequence spans 2729 residues: Protein NO VEIN (2729 aa).

A disordered region spans residues Met1–Asn27. Short sequence motifs (nuclear localization signal) lie at residues Lys194–Arg201 and Met473–Asn480. Disordered regions lie at residues Gly477–Leu517 and Leu2482–Glu2515. 2 stretches are compositionally biased toward basic and acidic residues: residues Arg488 to Lys497 and Asn2496 to Glu2515.

As to expression, specifically expressed in developing embryos, leaf primordia, and shoot and root apical meristems.

It localises to the nucleus. In terms of biological role, essential protein required for cell fate determination during embryogenesis. Mediates auxin-dependent coordinated cell-fate specification and patterning in embryos (e.g. cotyledon outgrowth and separation), shoots and roots (e.g. leaf vascular development, cellular patterning and stem cell maintenance in the meristems). Required for provascular PIN1 expression and region-specific expression of PIN7 in leaf primordia, cell type-specific expression of PIN3, PIN4, and PIN7 in the root, and PIN2 polarity in the root cortex. The protein is Protein NO VEIN of Arabidopsis thaliana (Mouse-ear cress).